Here is a 158-residue protein sequence, read N- to C-terminus: Small ribosomal subunit protein uS7c (158 aa).

This sequence belongs to the universal ribosomal protein uS7 family. Part of the 30S ribosomal subunit.

The protein localises to the plastid. It is found in the chloroplast. Functionally, one of the primary rRNA binding proteins, it binds directly to 16S rRNA where it nucleates assembly of the head domain of the 30S subunit. This is Small ribosomal subunit protein uS7c (rps7) from Trieres chinensis (Marine centric diatom).